Consider the following 226-residue polypeptide: Gap junction beta-2 protein (226 aa).

Residues 2–13 (DWSALQTILGGV) lie within the membrane without spanning it. The Cytoplasmic portion of the chain corresponds to 14 to 20 (NKHSTSI). The helical transmembrane segment at 21–40 (GKIWLTVLFIFRIMILVVAA) threads the bilayer. Residues 41–73 (KEVWGDEQADFVCNTLQPGCKNVCYDHYFPISH) are Extracellular-facing. The Ca(2+) site is built by Glu-42, Gly-45, and Glu-47. Intrachain disulfides connect Cys-53-Cys-180, Cys-60-Cys-174, and Cys-64-Cys-169. Residues 74–94 (IRLWALQLIFVSTPALLVAMH) form a helical membrane-spanning segment. Topologically, residues 95–135 (VAYYRHEKKRKFIRGEIKTEFKDIEEIKNQKVRIEGSLWWT) are cytoplasmic. The chain crosses the membrane as a helical span at residues 136 to 156 (YTGSIFFRVIFEAAFMYVFYV). At 157 to 189 (MYDGFAMQRLVKCNAWPCPNTVDCFVSRPTEKT) the chain is on the extracellular side. Residues 190–210 (VFTVFMIAVSGICILLNVTEL) form a helical membrane-spanning segment. Residues 211–226 (CYLLIRFCSGKSKKPV) are Cytoplasmic-facing.

Belongs to the connexin family. Beta-type (group I) subfamily. A hemichannel or connexon is composed of a hexamer of connexins. A functional gap junction is formed by the apposition of two hemichannels. Forms heteromeric channels with GJB4. Interacts with CNST.

Its subcellular location is the cell membrane. It is found in the cell junction. It localises to the gap junction. In terms of biological role, structural component of gap junctions. Gap junctions are dodecameric channels that connect the cytoplasm of adjoining cells. They are formed by the docking of two hexameric hemichannels, one from each cell membrane. Small molecules and ions diffuse from one cell to a neighboring cell via the central pore. This Ovis aries (Sheep) protein is Gap junction beta-2 protein (GJB2).